A 616-amino-acid chain; its full sequence is Chaperone protein HscA (616 aa).

Belongs to the heat shock protein 70 family.

Its function is as follows. Chaperone involved in the maturation of iron-sulfur cluster-containing proteins. Has a low intrinsic ATPase activity which is markedly stimulated by HscB. Involved in the maturation of IscU. In Proteus mirabilis (strain HI4320), this protein is Chaperone protein HscA.